A 541-amino-acid polypeptide reads, in one-letter code: Chaperonin GroEL 2 (541 aa).

Residues 30 to 33 (TLGP), Lys-51, 87 to 91 (DGTTT), Gly-415, and Asp-496 contribute to the ATP site.

The protein belongs to the chaperonin (HSP60) family. In terms of assembly, forms a cylinder of 14 subunits composed of two heptameric rings stacked back-to-back. Interacts with the co-chaperonin GroES.

The protein localises to the cytoplasm. It catalyses the reaction ATP + H2O + a folded polypeptide = ADP + phosphate + an unfolded polypeptide.. In terms of biological role, together with its co-chaperonin GroES, plays an essential role in assisting protein folding. The GroEL-GroES system forms a nano-cage that allows encapsulation of the non-native substrate proteins and provides a physical environment optimized to promote and accelerate protein folding. The chain is Chaperonin GroEL 2 from Gluconacetobacter diazotrophicus (strain ATCC 49037 / DSM 5601 / CCUG 37298 / CIP 103539 / LMG 7603 / PAl5).